The sequence spans 753 residues: Transcription factor SOX-30 (753 aa).

2 disordered regions span residues 1–45 and 137–161; these read MERA…TLSA and AKKQKLGPSLDQSVGPRGAVETGPR. A compositionally biased stretch (pro residues) spans 7–23; sequence EPPPQPRPLRPAPPPLP. The segment at residues 337–405 is a DNA-binding region (HMG box); that stretch reads VKRPMNAFMV…KHREEFPGWV (69 aa). Disordered regions lie at residues 514–575 and 726–753; these read TGPS…SPCP and PTSTPSSIQQVNVTDSDEEEEEKVLRDL. Polar residues-rich tracts occupy residues 531–563 and 726–739; these read TVKQPTPVSLESANRISSSASTAHARFATSTIQ and PTSTPSSIQQVNVT.

Interacts with CTNNB1, competitively inhibiting CTNNB1-TCF7L2/TCF4 interaction.

The protein localises to the nucleus. The protein resides in the cytoplasm. In terms of biological role, acts both as a transcriptional activator and a repressor. Binds to the DNA sequence 5'-ACAAT-3' and shows a preference for guanine residues surrounding this core motif. Binds to its own promoter and activates its own transcription. Required to activate the expression of postmeiotic genes involved in spermiogenesis. Binds to the promoter region of CTNNB1 and represses its transcription which leads to inhibition of Wnt signaling. Also inhibits Wnt signaling by binding to the CTNNB1 protein, preventing interaction of CTNNB1 with TCF7L2/TCF4. The chain is Transcription factor SOX-30 (SOX30) from Homo sapiens (Human).